The chain runs to 520 residues: Transcription factor MYB33 (520 aa).

The segment at 1-24 (MSYTSTDSDHNESPAADDNGSDCR) is disordered. HTH myb-type domains are found at residues 29 to 81 (GHAL…ANHL) and 82 to 136 (RPNL…KRRQ). 2 consecutive DNA-binding regions (H-T-H motif) follow at residues 57 to 81 (WNAV…ANHL) and 109 to 132 (WARM…NTRI). Low complexity predominate over residues 331–342 (SSSPPHSDLLDP). 2 disordered regions span residues 331 to 359 (SSSP…GEES) and 426 to 447 (EMST…RKPL).

Mostly expressed in stems, shoot apices, flowers and floral shoot tips, and, to a lower extent, in roots (e.g. root tips), seedlings, leaves and siliques.

Its subcellular location is the nucleus. Transcriptional activator of alpha-amylase expression that binds to 5'-CAACTGTC-3' motif in target gene promoter. Positive regulator of abscisic acid (ABA) responses leading to growth arrest during seed germination. In vegetative tissues, inhibits growth by reducing cell proliferation. Promotes the expression of aleurone-related genes (e.g. CP1, CP, GASA1, BXL1 and BXL2) in seeds. Together with MYB65 and MYB101, promotes the programmed cell death (PCD) the vacuolation of protein storage vacuoles (PSVs) in the aleurone layers during seed germination. Binds to a GARE site (GA-response element) in the LEAFY promoter, essential for its gibberellic acid (GA)-mediated induction. Together with MYB65, facilitates anther and tapetum development. The chain is Transcription factor MYB33 from Arabidopsis thaliana (Mouse-ear cress).